The sequence spans 212 residues: Uridine kinase (212 aa).

13–20 (GASASGKS) is an ATP binding site.

The protein belongs to the uridine kinase family.

It is found in the cytoplasm. It carries out the reaction uridine + ATP = UMP + ADP + H(+). The enzyme catalyses cytidine + ATP = CMP + ADP + H(+). It functions in the pathway pyrimidine metabolism; CTP biosynthesis via salvage pathway; CTP from cytidine: step 1/3. Its pathway is pyrimidine metabolism; UMP biosynthesis via salvage pathway; UMP from uridine: step 1/1. The chain is Uridine kinase from Shewanella frigidimarina (strain NCIMB 400).